The sequence spans 322 residues: tRNA pseudouridine synthase B (322 aa).

Residues 1–11 are compositionally biased toward basic and acidic residues; that stretch reads MRPPRTTELDR. The segment at 1 to 22 is disordered; that stretch reads MRPPRTTELDRPMTTAASQRPR. Aspartate 65 functions as the Nucleophile in the catalytic mechanism.

The protein belongs to the pseudouridine synthase TruB family. Type 1 subfamily.

It carries out the reaction uridine(55) in tRNA = pseudouridine(55) in tRNA. Its function is as follows. Responsible for synthesis of pseudouridine from uracil-55 in the psi GC loop of transfer RNAs. The polypeptide is tRNA pseudouridine synthase B (Burkholderia lata (strain ATCC 17760 / DSM 23089 / LMG 22485 / NCIMB 9086 / R18194 / 383)).